Reading from the N-terminus, the 255-residue chain is Geranylgeranylglyceryl phosphate synthase (255 aa).

The Mg(2+) site is built by Asp-34 and Thr-64. Sn-glycerol 1-phosphate is bound by residues Tyr-182–Gly-188, Gly-213–Gly-214, and Gly-235–Asn-236.

It belongs to the GGGP/HepGP synthase family. Group II subfamily. It depends on Mg(2+) as a cofactor.

The protein localises to the cytoplasm. It catalyses the reaction sn-glycerol 1-phosphate + (2E,6E,10E)-geranylgeranyl diphosphate = sn-3-O-(geranylgeranyl)glycerol 1-phosphate + diphosphate. Its pathway is membrane lipid metabolism; glycerophospholipid metabolism. Its function is as follows. Prenyltransferase that catalyzes the transfer of the geranylgeranyl moiety of geranylgeranyl diphosphate (GGPP) to the C3 hydroxyl of sn-glycerol-1-phosphate (G1P). This reaction is the first ether-bond-formation step in the biosynthesis of archaeal membrane lipids. The protein is Geranylgeranylglyceryl phosphate synthase of Saccharolobus islandicus (strain M.16.27) (Sulfolobus islandicus).